Consider the following 155-residue polypeptide: Rusticyanin (155 aa).

One can recognise a Plastocyanin-like domain in the interval 53-155; it reads SFEVHDKKNP…TGMFGKIIVK (103 aa). Histidine 85, cysteine 138, histidine 143, and methionine 148 together coordinate Cu cation.

Monomer. Cu cation is required as a cofactor.

It localises to the periplasm. Its function is as follows. Electron carrier from cytochrome c552 to the A-type oxidase. This Acidithiobacillus ferrooxidans (Thiobacillus ferrooxidans) protein is Rusticyanin (rus).